The chain runs to 87 residues: Putative membrane protein insertion efficiency factor (87 aa).

This sequence belongs to the UPF0161 family.

The protein resides in the cell membrane. In terms of biological role, could be involved in insertion of integral membrane proteins into the membrane. This chain is Putative membrane protein insertion efficiency factor, found in Streptococcus pyogenes serotype M12 (strain MGAS2096).